We begin with the raw amino-acid sequence, 381 residues long: L-lactate dehydrogenase (381 aa).

One can recognise an FMN hydroxy acid dehydrogenase domain in the interval 1-380 (MIISSTNDYR…TRDALVDLSK (380 aa)). Tyrosine 24 lines the substrate pocket. Residues serine 106 and glutamine 127 each coordinate FMN. Tyrosine 129 contacts substrate. Position 155 (threonine 155) interacts with FMN. Arginine 164 is a binding site for substrate. Residue lysine 251 coordinates FMN. Histidine 275 functions as the Proton acceptor in the catalytic mechanism. Arginine 278 lines the substrate pocket. 306–330 (DSGIRNGLDIVRMLALGADATMLGR) serves as a coordination point for FMN.

The protein belongs to the FMN-dependent alpha-hydroxy acid dehydrogenase family. It depends on FMN as a cofactor.

It is found in the cell inner membrane. The catalysed reaction is (S)-lactate + A = pyruvate + AH2. Its function is as follows. Catalyzes the conversion of L-lactate to pyruvate. Is coupled to the respiratory chain. In Actinobacillus pleuropneumoniae serotype 3 (strain JL03), this protein is L-lactate dehydrogenase.